An 88-amino-acid chain; its full sequence is Small ribosomal subunit protein uS15 (88 aa).

This sequence belongs to the universal ribosomal protein uS15 family. In terms of assembly, part of the 30S ribosomal subunit. Forms a bridge to the 50S subunit in the 70S ribosome, contacting the 23S rRNA.

In terms of biological role, one of the primary rRNA binding proteins, it binds directly to 16S rRNA where it helps nucleate assembly of the platform of the 30S subunit by binding and bridging several RNA helices of the 16S rRNA. Forms an intersubunit bridge (bridge B4) with the 23S rRNA of the 50S subunit in the ribosome. The sequence is that of Small ribosomal subunit protein uS15 from Leptospira borgpetersenii serovar Hardjo-bovis (strain JB197).